The chain runs to 364 residues: Methylthioribose-1-phosphate isomerase (364 aa).

Residues 49 to 51, R89, and Q201 contribute to the substrate site; that span reads RGA. The active-site Proton donor is the D242. Residue 252-253 participates in substrate binding; that stretch reads NK.

Belongs to the eIF-2B alpha/beta/delta subunits family. MtnA subfamily.

The enzyme catalyses 5-(methylsulfanyl)-alpha-D-ribose 1-phosphate = 5-(methylsulfanyl)-D-ribulose 1-phosphate. Its pathway is amino-acid biosynthesis; L-methionine biosynthesis via salvage pathway; L-methionine from S-methyl-5-thio-alpha-D-ribose 1-phosphate: step 1/6. In terms of biological role, catalyzes the interconversion of methylthioribose-1-phosphate (MTR-1-P) into methylthioribulose-1-phosphate (MTRu-1-P). In Leptospira interrogans serogroup Icterohaemorrhagiae serovar Lai (strain 56601), this protein is Methylthioribose-1-phosphate isomerase.